We begin with the raw amino-acid sequence, 439 residues long: Ribosomal protein uS12 methylthiotransferase RimO (439 aa).

In terms of domain architecture, MTTase N-terminal spans 3–115 (NKLHIVSLGC…IDELLVEKKS (113 aa)). Positions 12, 46, 78, 146, 150, and 153 each coordinate [4Fe-4S] cluster. The Radical SAM core domain occupies 132 to 361 (TGSTYHAYIK…GKIAADVMQA (230 aa)).

This sequence belongs to the methylthiotransferase family. RimO subfamily. [4Fe-4S] cluster is required as a cofactor.

Its subcellular location is the cytoplasm. It carries out the reaction L-aspartate(89)-[ribosomal protein uS12]-hydrogen + (sulfur carrier)-SH + AH2 + 2 S-adenosyl-L-methionine = 3-methylsulfanyl-L-aspartate(89)-[ribosomal protein uS12]-hydrogen + (sulfur carrier)-H + 5'-deoxyadenosine + L-methionine + A + S-adenosyl-L-homocysteine + 2 H(+). Catalyzes the methylthiolation of an aspartic acid residue of ribosomal protein uS12. This is Ribosomal protein uS12 methylthiotransferase RimO from Sulfurimonas denitrificans (strain ATCC 33889 / DSM 1251) (Thiomicrospira denitrificans (strain ATCC 33889 / DSM 1251)).